A 515-amino-acid chain; its full sequence is Putative asparagine synthetase [glutamine-hydrolyzing] 2 (515 aa).

The For GATase activity role is filled by C2. In terms of domain architecture, Glutamine amidotransferase type-2 spans 2 to 229 (CGINGIIRFG…ARQNLIFDLD (228 aa)). Residues 52–56 (RLAIL), 92–94 (NGE), and D114 contribute to the L-glutamine site. ATP contacts are provided by residues I306 and 378–379 (SG).

This sequence belongs to the asparagine synthetase family.

The catalysed reaction is L-aspartate + L-glutamine + ATP + H2O = L-asparagine + L-glutamate + AMP + diphosphate + H(+). It functions in the pathway amino-acid biosynthesis; L-asparagine biosynthesis; L-asparagine from L-aspartate (L-Gln route): step 1/1. The chain is Putative asparagine synthetase [glutamine-hydrolyzing] 2 from Methanocaldococcus jannaschii (strain ATCC 43067 / DSM 2661 / JAL-1 / JCM 10045 / NBRC 100440) (Methanococcus jannaschii).